Here is a 160-residue protein sequence, read N- to C-terminus: 3-dehydroquinate dehydratase (160 aa).

The active-site Proton acceptor is tyrosine 22. The substrate site is built by asparagine 73, histidine 79, and aspartate 86. The active-site Proton donor is the histidine 99. Substrate-binding positions include 100–101 and arginine 110; that span reads IS.

Belongs to the type-II 3-dehydroquinase family. In terms of assembly, homododecamer.

The enzyme catalyses 3-dehydroquinate = 3-dehydroshikimate + H2O. It participates in metabolic intermediate biosynthesis; chorismate biosynthesis; chorismate from D-erythrose 4-phosphate and phosphoenolpyruvate: step 3/7. Functionally, catalyzes a trans-dehydration via an enolate intermediate. This Campylobacter lari (strain RM2100 / D67 / ATCC BAA-1060) protein is 3-dehydroquinate dehydratase.